The primary structure comprises 482 residues: Glycogen synthase (482 aa).

K21 is an ADP-alpha-D-glucose binding site.

It belongs to the glycosyltransferase 1 family. Bacterial/plant glycogen synthase subfamily.

It catalyses the reaction [(1-&gt;4)-alpha-D-glucosyl](n) + ADP-alpha-D-glucose = [(1-&gt;4)-alpha-D-glucosyl](n+1) + ADP + H(+). The protein operates within glycan biosynthesis; glycogen biosynthesis. Synthesizes alpha-1,4-glucan chains using ADP-glucose. In Clostridium perfringens (strain 13 / Type A), this protein is Glycogen synthase.